Consider the following 298-residue polypeptide: FH protein interacting protein FIP2 (298 aa).

Residues 9 to 80 enclose the BTB domain; that stretch reads SMVRLNIGGK…LRDGVIPSLS (72 aa). 4 consecutive Pentapeptide repeat domains span residues 129 to 165, 166 to 203, 216 to 255, and 256 to 295; these read ERVR…FFSR, TNLQ…GALL, ACLV…NLKG, and AKLS…NMTG.

In terms of assembly, interacts with FH1. In terms of tissue distribution, expressed in all tissues but preferentially in roots and flowers.

It participates in protein modification; protein ubiquitination. Its function is as follows. May act as a substrate-specific adapter of an E3 ubiquitin-protein ligase complex (CUL3-RBX1-BTB) which mediates the ubiquitination and subsequent proteasomal degradation of target proteins. The protein is FH protein interacting protein FIP2 (FIP2) of Arabidopsis thaliana (Mouse-ear cress).